A 249-amino-acid chain; its full sequence is NADH dehydrogenase [ubiquinone] flavoprotein 2, mitochondrial (249 aa).

The N-terminal 32 residues, 1–32 (MFFSAALRARAAGLTAHWGRHVRNLHKTAKQN), are a transit peptide targeting the mitochondrion. K61 carries the post-translational modification N6-acetyllysine. Residues C135, C140, C176, and C180 each coordinate [2Fe-2S] cluster. Y193 carries the post-translational modification Phosphotyrosine; by SRC. The interval 213–249 (IPKPGPRSGRFSCEPAGGLTSLTEPPKGPGFGVQAGL) is disordered.

Belongs to the complex I 24 kDa subunit family. In terms of assembly, core subunit of respiratory chain NADH dehydrogenase (Complex I) which is composed of 45 different subunits. This is a component of the flavoprotein-sulfur (FP) fragment of the enzyme. The cofactor is [2Fe-2S] cluster.

It is found in the mitochondrion inner membrane. The catalysed reaction is a ubiquinone + NADH + 5 H(+)(in) = a ubiquinol + NAD(+) + 4 H(+)(out). In terms of biological role, core subunit of the mitochondrial membrane respiratory chain NADH dehydrogenase (Complex I) which catalyzes electron transfer from NADH through the respiratory chain, using ubiquinone as an electron acceptor. Parts of the peripheral arm of the enzyme, where the electrons from NADH are accepted by flavin mononucleotide (FMN) and then passed along a chain of iron-sulfur clusters by electron tunnelling to the final acceptor ubiquinone. Contains one iron-sulfur cluster. The protein is NADH dehydrogenase [ubiquinone] flavoprotein 2, mitochondrial of Pan troglodytes (Chimpanzee).